The sequence spans 361 residues: Rho-GTPase-activating protein 5 (361 aa).

Residues 52–245 (IFLTRRDGEK…FLINHQGSFI (194 aa)) form the Rho-GAP domain. Residues 306-323 (SSATYSNSPSSNFSNMKS) are compositionally biased toward low complexity. The disordered stretch occupies residues 306–345 (SSATYSNSPSSNFSNMKSSEVDPGSPPRIKSRSYSLSRSS).

It is found in the membrane. Its function is as follows. GTPase-activating protein for Rho1. Has a role in the negative regulation of (1-3)beta-D-glucan synthase activity and cell integrity. The sequence is that of Rho-GTPase-activating protein 5 (rga5) from Schizosaccharomyces pombe (strain 972 / ATCC 24843) (Fission yeast).